Here is a 198-residue protein sequence, read N- to C-terminus: Cytochrome c oxidase assembly protein CtaG (198 aa).

The Cytoplasmic portion of the chain corresponds to 1–12; sequence MADTGQSDRKER. The helical; Signal-anchor for type II membrane protein transmembrane segment at 13 to 35 threads the bilayer; sequence SNGVIVGTCLAFVVGMVGMAYAA. Topologically, residues 36–198 are periplasmic; the sequence is VPLYDMFCRV…QVKSRTENKL (163 aa).

Belongs to the COX11/CtaG family.

It localises to the cell inner membrane. In terms of biological role, exerts its effect at some terminal stage of cytochrome c oxidase synthesis, probably by being involved in the insertion of the copper B into subunit I. The sequence is that of Cytochrome c oxidase assembly protein CtaG from Sinorhizobium medicae (strain WSM419) (Ensifer medicae).